Reading from the N-terminus, the 295-residue chain is Pyridoxal 5'-phosphate synthase subunit PdxS (295 aa).

Asp-25 is a binding site for D-ribose 5-phosphate. Lys-82 (schiff-base intermediate with D-ribose 5-phosphate) is an active-site residue. D-ribose 5-phosphate is bound at residue Gly-154. A D-glyceraldehyde 3-phosphate-binding site is contributed by Arg-166. D-ribose 5-phosphate-binding positions include Gly-215 and 236–237; that span reads GS.

It belongs to the PdxS/SNZ family. As to quaternary structure, in the presence of PdxT, forms a dodecamer of heterodimers.

It catalyses the reaction aldehydo-D-ribose 5-phosphate + D-glyceraldehyde 3-phosphate + L-glutamine = pyridoxal 5'-phosphate + L-glutamate + phosphate + 3 H2O + H(+). It participates in cofactor biosynthesis; pyridoxal 5'-phosphate biosynthesis. Functionally, catalyzes the formation of pyridoxal 5'-phosphate from ribose 5-phosphate (RBP), glyceraldehyde 3-phosphate (G3P) and ammonia. The ammonia is provided by the PdxT subunit. Can also use ribulose 5-phosphate and dihydroxyacetone phosphate as substrates, resulting from enzyme-catalyzed isomerization of RBP and G3P, respectively. In Natranaerobius thermophilus (strain ATCC BAA-1301 / DSM 18059 / JW/NM-WN-LF), this protein is Pyridoxal 5'-phosphate synthase subunit PdxS.